A 54-amino-acid polypeptide reads, in one-letter code: U-reduvitoxin-Pr1a (54 aa).

Positions 1–19 are cleaved as a signal peptide; the sequence is MKLLGLLLLVFTFMALAFA. Disulfide bonds link cysteine 24–cysteine 39, cysteine 31–cysteine 44, and cysteine 38–cysteine 51.

Belongs to the venom Ptu1-like knottin family. As to expression, expressed by the venom gland (posterior main gland) (at protein level).

Its subcellular location is the secreted. Functionally, binds reversibly and blocks P/Q-type voltage-gated calcium channels (Cav). The sequence is that of U-reduvitoxin-Pr1a from Platymeris rhadamanthus (Red spot assassin bug).